Reading from the N-terminus, the 140-residue chain is Large ribosomal subunit protein uL14 (140 aa).

The protein belongs to the universal ribosomal protein uL14 family.

The polypeptide is Large ribosomal subunit protein uL14 (RpL23-A) (Aedes aegypti (Yellowfever mosquito)).